Consider the following 1163-residue polypeptide: MKSALHQIGKTSLAAALSGAVLLSAQTTHAAALSVSQQPLMLIQGVAPNMLVTLDDSGSMAYAYAPDSLVNSRNNVYFASNSYNPMYFDPNTQYKLPKKVTLSNGQIQVQDYSKPSFTAAWRNGFTQEGRVNLSRDYRPTVQYQGGSGAGTESSIDWYGAPAFYYQYSGGRGCSLTTSSCYTRVEISGAAQQQNFANWYSFYRTRALATQTAANLAFYSLPENARISWQLLNSSSCLIGSGSSNCYNNYLRDFTGQHRVNFFNWLENLSVGGGTPLRQAMTRAGEFLKKTGVNGPYAYRPGTQTSPEYSCRGSYHILMTDGLWNNDSASVGNADSTSRSLPDGKSYSSQTPYRDAASNTLADQAFHYWATDARPDIDDNIKPYIPYPDQANPSAEYWNPRNDPATWQHMVTYTLGLGLTTSLTSPKWEGSTYSGGYDEIAAGRLSWPNASNNHSNNVYDLWHAAVNSRGEFFSADSPDQLVAAFQDILNRISGKDLPASRPAISSSLQEDDTGDKLTRFAYQTSFASDKNWAGDLTRYSLTTQDKATVQTKLWSAQSILDAMPNGGAGRKIMMAGSGTSGLKEFTWGSLSADQQRQLNRDPDRNDVADTKGQDRVAFLRGDRSKENSDNFRTRNSILGDIINSSPATVGKAQYLTYLAQPIEPSGNYSTFAEAQKTRAPRVYVGANDGMLHGFDTDGNETFAFIPSAVFEKLHKLTARGYQGGAHQFYVDGSPVVADAFFGGAWHTVLIGSLRAGGKGLFALDVTDPANIKLLWEIGVDQEPDLGYSFPKPTVARLHNGKWAVVTGNGYSSLNDKAALLIIDLETGAITRKLEVTGRTGVPNGLSSPRLADNNSDGVADYAYAGDLQGNLWRFDLIAGKVNQDDPFSRANDGPAVASSFRVSFGGQPLYSAVDSAGAAQAITAAPSLVRHPTRKGYIVIFGTGKYFENADARADTSRAQTLYGIWDQQTKGEAAGSTPRLTRGNLQQQTLDLQADSTFASTARTIRIASQNPVNWLNNDGSTKQSGWYLDFMVNGTLKGEMLIEDMIAIGQVVLLQTITPNDDPCADGASNWTYGLDPYTGGRTSFTVFDLARQGVVDSKSDYSYNKQNVAVSGTEQKGLGGLTLSTNEQGNPEVCSSGECLTVNPGPNTRGRQNWRPIEGKN.

The first 30 residues, 1–30 (MKSALHQIGKTSLAAALSGAVLLSAQTTHA), serve as a signal peptide directing secretion. The tract at residues 329 to 352 (SVGNADSTSRSLPDGKSYSSQTPY) is disordered. Ca(2+) contacts are provided by aspartate 600, aspartate 602, asparagine 604, and aspartate 608. Positions 619-621 (RGD) are integrin-binding motif RGD. Positions 851, 853, 855, 857, and 859 each coordinate Ca(2+). Residues 1138 to 1163 (SGECLTVNPGPNTRGRQNWRPIEGKN) form a disordered region.

This sequence belongs to the PilY1 family. In terms of assembly, interacts (via C-terminal 532-1163) with host integrins alpha-V/beta-3 (ITGAV/ITGB3) and alpha-V/beta-5 (ITGAV/ITGB5).

The protein localises to the fimbrium. It is found in the membrane. Its subcellular location is the cytoplasm. The protein resides in the cytosol. Functionally, involved in pilus assembly, twitching motility and adhesion to host cells. Primes type IV pili (T4P) assembly and is required for inclusion of minor pilins PilV, PilW and PilX to the surface pili. Stabilizes assembled pilus fibers likely by antagonizing retraction mediated by PilT. Calcium-binding and calcium release by PilY1 seem to be essential for twitching motility and for regulation of pilus retraction dynamics of PilT. Adhesin for human tissue specifically recognizing a host receptor localized or enriched on basolateral epithelial cell surfaces. Binds host integrins in an calcium-dependent manner in vitro and this interaction may be employed by the bacterium to mediate host epithelial cell binding in vivo. This Pseudomonas aeruginosa (strain PAK) protein is Type IV pilus biogenesis factor PilY1.